The following is a 179-amino-acid chain: Large ribosomal subunit protein uL10 (179 aa).

This sequence belongs to the universal ribosomal protein uL10 family. As to quaternary structure, part of the ribosomal stalk of the 50S ribosomal subunit. The N-terminus interacts with L11 and the large rRNA to form the base of the stalk. The C-terminus forms an elongated spine to which L12 dimers bind in a sequential fashion forming a multimeric L10(L12)X complex.

Its function is as follows. Forms part of the ribosomal stalk, playing a central role in the interaction of the ribosome with GTP-bound translation factors. This is Large ribosomal subunit protein uL10 from Mycolicibacterium gilvum (strain PYR-GCK) (Mycobacterium gilvum (strain PYR-GCK)).